Consider the following 367-residue polypeptide: Avirulence protein ATR5 (367 aa).

The N-terminal stretch at Met1–Ala16 is a signal peptide. A glycan (N-linked (GlcNAc...) asparagine) is linked at Asn20. Positions Asn33–Thr65 are disordered. Residues Arg54–Thr65 are compositionally biased toward basic and acidic residues. The short motif at Thr61–Arg64 is the dEER element.

It belongs to the RxLR effector family.

It localises to the secreted. Its subcellular location is the host cell. Functionally, secreted effector that acts as an elicitor of hypersensitive response (HR) specifically on plants carrying defense protein RPP5. The chain is Avirulence protein ATR5 from Hyaloperonospora arabidopsidis (strain Emoy2) (Downy mildew agent).